The chain runs to 99 residues: Probable small ribosomal subunit protein cS23 (99 aa).

This sequence belongs to the chloroplast-specific ribosomal protein cS23 family. As to quaternary structure, part of the 30S ribosomal subunit.

In terms of biological role, probably a ribosomal protein or a ribosome-associated protein. This Synechococcus sp. (strain JA-3-3Ab) (Cyanobacteria bacterium Yellowstone A-Prime) protein is Probable small ribosomal subunit protein cS23.